We begin with the raw amino-acid sequence, 96 residues long: UPF0235 protein CAB243 (96 aa).

It belongs to the UPF0235 family.

The sequence is that of UPF0235 protein CAB243 from Chlamydia abortus (strain DSM 27085 / S26/3) (Chlamydophila abortus).